A 660-amino-acid polypeptide reads, in one-letter code: Peroxisomal acyl-coenzyme A oxidase 1 (660 aa).

Position 26 is a phosphoserine (Ser-26). N6-succinyllysine is present on residues Lys-89 and Lys-90. 2 residues coordinate FAD: Thr-139 and Gly-178. N6-acetyllysine is present on Lys-216. N6-succinyllysine is present on Lys-241. N6-acetyllysine is present on residues Lys-255, Lys-267, and Lys-272. N6-succinyllysine is present on Lys-349. Glu-421 (proton acceptor) is an active-site residue. 2 positions are modified to N6-acetyllysine; alternate: Lys-437 and Lys-446. Lys-437 and Lys-446 each carry N6-succinyllysine; alternate. Lys-500 carries the N6-acetyllysine modification. Lys-512 is subject to N6-acetyllysine; alternate. Lys-512 is subject to N6-succinyllysine; alternate. N6-succinyllysine is present on Lys-542. Residue Lys-637 is modified to N6-acetyllysine; alternate. Position 637 is an N6-succinyllysine; alternate (Lys-637). At Lys-643 the chain carries N6-succinyllysine. Position 649 is a phosphoserine (Ser-649). Lys-651 bears the N6-acetyllysine mark. At Lys-654 the chain carries N6-succinyllysine. Positions 658 to 660 (SKL) match the Microbody targeting signal motif.

It belongs to the acyl-CoA oxidase family. As to quaternary structure, homodimer. Interacts with LONP2. FAD is required as a cofactor.

It localises to the peroxisome. It carries out the reaction a 2,3-saturated acyl-CoA + O2 = a (2E)-enoyl-CoA + H2O2. It catalyses the reaction hexadecanoyl-CoA + O2 = (2E)-hexadecenoyl-CoA + H2O2. The catalysed reaction is dodecanoyl-CoA + O2 = (2E)-dodecenoyl-CoA + H2O2. The enzyme catalyses octanoyl-CoA + O2 = (2E)-octenoyl-CoA + H2O2. It carries out the reaction decanoyl-CoA + O2 = (2E)-decenoyl-CoA + H2O2. It catalyses the reaction tetradecanoyl-CoA + O2 = (2E)-tetradecenoyl-CoA + H2O2. The catalysed reaction is hexadecanedioyl-CoA + O2 = (2E)-hexadecenedioyl-CoA + H2O2. The enzyme catalyses tetracosanoyl-CoA + O2 = (2E)-tetracosenoyl-CoA + H2O2. It carries out the reaction glutaryl-CoA + O2 = (2E)-glutaconyl-CoA + H2O2. It catalyses the reaction hexanoyl-CoA + O2 = (2E)-hexenoyl-CoA + H2O2. The catalysed reaction is octadecanoyl-CoA + O2 = (2E)-octadecenoyl-CoA + H2O2. The enzyme catalyses (5Z,8Z,11Z,14Z,17Z)-eicosapentaenoyl-CoA + O2 = (2E,5Z,8Z,11Z,14Z,17Z)-icosahexaenoyl-CoA + H2O2. It carries out the reaction (6Z,9Z,12Z,15Z,18Z,21Z)-tetracosahexaenoyl-CoA + O2 = (2E,6Z,9Z,12Z,15Z,18Z,21Z)-tetracosaheptaenoyl-CoA + H2O2. It participates in lipid metabolism; peroxisomal fatty acid beta-oxidation. In terms of biological role, involved in the initial and rate-limiting step of peroxisomal beta-oxidation of straight-chain saturated and unsaturated very-long-chain fatty acids. Catalyzes the desaturation of fatty acyl-CoAs such as palmitoyl-CoA (hexadecanoyl-CoA) to 2-trans-enoyl-CoAs ((2E)-enoyl-CoAs) such as (2E)-hexadecenoyl-CoA, and donates electrons directly to molecular oxygen (O(2)), thereby producing hydrogen peroxide (H(2)O(2)). Its function is as follows. Shows highest activity against medium-chain fatty acyl-CoAs. Shows optimum activity with a chain length of 10 carbons (decanoyl-CoA) in vitro. Is active against a much broader range of substrates and shows activity towards long-chain acyl-CoAs. The chain is Peroxisomal acyl-coenzyme A oxidase 1 from Pongo abelii (Sumatran orangutan).